The following is a 498-amino-acid chain: SCADDRNPLEECFQETDYEEFLEIARNGLKATSNPKHVVIVGAGMSGLSAAYVLAGAGHQVTVLEASERAGGRVRTYRNDKEGWYANLGPMRLPEKHRIVREYITKFGLQLNEFSQENENAWYFIKNIRKRVGEVKKDPGLLQYPVKPSEEGKSAGQLYEESLGKVVEELKRTNCSYILDKYDTYSTKEYLIKEGNLSPGAVDMIGDLLNEDSGYYVSFIESLKHDNIFGYEKRFNEIVDGMDKLPTSMYQAIEEKVRFNARVIKIQQNDNEVTVTYQTSENEMSPVTADYVIVCTTSRAARRITFEPPLPPKKAHALRSVHYRSGTKIFLTCTKKFWEDDGIHGGKSTTDLPSRFVYYPNHDFSSGSAVIMAYGIGDDANFFQALDHKDCGDTVINDLSLIHQLTKEEIQSFCYLSKIQRWSLDKYAMGGITTFTPYQFQHFSEALTAPFKRIYFAGEYTAQFHGWIDSTIKSGLTAARDVNRASENPSGIHLSNDN.

The first 3 residues, serine 1–alanine 3, serve as a signal peptide directing secretion. Cysteine 12 and cysteine 175 are oxidised to a cystine. Residues methionine 45–serine 46, glutamate 65–alanine 66, arginine 73, and glycine 89–arginine 92 contribute to the FAD site. Arginine 92 is a substrate binding site. N-linked (GlcNAc...) asparagine glycosylation is present at asparagine 174. Residue histidine 225 coordinates substrate. Valine 263 is a binding site for FAD. Cysteines 333 and 414 form a disulfide. Tyrosine 374 contacts substrate. FAD contacts are provided by residues glutamate 459 and glycine 466–threonine 471. Glycine 466–tryptophan 467 contacts substrate.

It belongs to the flavin monoamine oxidase family. FIG1 subfamily. In terms of assembly, monomer. This is in contrast with most of its orthologs, that are non-covalently linked homodimers. FAD is required as a cofactor. Expressed by the venom gland.

The protein localises to the secreted. The catalysed reaction is an L-alpha-amino acid + O2 + H2O = a 2-oxocarboxylate + H2O2 + NH4(+). It carries out the reaction L-leucine + O2 + H2O = 4-methyl-2-oxopentanoate + H2O2 + NH4(+). Functionally, catalyzes an oxidative deamination of predominantly hydrophobic and aromatic L-amino acids, thus producing hydrogen peroxide that may contribute to the diverse toxic effects of this enzyme. Shows activity on L-Leu. Damage cell membranes of the Gram-positive bacteria S.aureus (MIC=4 ug/ml and MBC=8 ug/ml) and the Gram-negative bacteria A.baumanni (MIC=2 ug/ml and MBC=4 ug/ml). This antibacterial activity is dependent on the production of hydrogen peroxyde, since it is inhibited by catalase, a hydrogen peroxyde scavenger. The protein is L-amino acid oxidase Bs29 of Bothriechis schlegelii (Eyelash palm pitviper).